Consider the following 350-residue polypeptide: MASVSLLSALAVRLLRPTHGCHPRLQPFHLAAVRNEAVVISGRKLAQQIKQEVQQEVEEWVASGNKRPHLSVILVGDNPASHSYVLNKTRAAAEVGINSETIVKPASVSEEELLNSIRKLNNDENVDGLLVQLPLPEHIDERKVCNAVSPDKDVDGFHVINVGRMCLDQYSMLPATPWGVWEIIKRTGIPTLGKNVVVAGRSKNVGMPIAMLLHTDGAHERPGGDATVTISHRYTPKEQLKKHTILADIVISAAGIPNLITADMIKEGAAVIDVGINRVQDPVTAKPKLVGDVDFEGVKKKAGYITPVPGGVGPMTVAMLMKNTIIAAKKVLRPEELEVFKSKQRGVATN.

The transit peptide at 1–35 (MASVSLLSALAVRLLRPTHGCHPRLQPFHLAAVRN) directs the protein to the mitochondrion. The residue at position 50 (K50) is an N6-acetyllysine; alternate. Residue K50 forms a Glycyl lysine isopeptide (Lys-Gly) (interchain with G-Cter in SUMO2); alternate linkage. Residues 84 to 88 (YVLNK) and 131 to 133 (VQL) contribute to the substrate site. NAD(+) contacts are provided by residues 200–202 (GRS) and R233. A substrate-binding site is contributed by 309–313 (PGGVG).

The protein belongs to the tetrahydrofolate dehydrogenase/cyclohydrolase family. As to quaternary structure, homodimer. The cofactor is Mg(2+).

Its subcellular location is the mitochondrion. It carries out the reaction (6R)-5,10-methylene-5,6,7,8-tetrahydrofolate + NAD(+) = (6R)-5,10-methenyltetrahydrofolate + NADH. The enzyme catalyses (6R)-5,10-methenyltetrahydrofolate + H2O = (6R)-10-formyltetrahydrofolate + H(+). In terms of biological role, although its dehydrogenase activity is NAD-specific, it can also utilize NADP at a reduced efficiency. The polypeptide is Bifunctional methylenetetrahydrofolate dehydrogenase/cyclohydrolase, mitochondrial (Mthfd2) (Mus musculus (Mouse)).